Reading from the N-terminus, the 53-residue chain is Ovomucoid (53 aa).

The Kazal-like domain maps to 3-53 (VDCSEYPKPGCMMERLPLCGSDNKTYNDKCNFCNAVVESNGTLTLNHFGEC). Disulfide bonds link Cys-5–Cys-35, Cys-13–Cys-32, and Cys-21–Cys-53. Asn-42 carries an N-linked (GlcNAc...) asparagine glycan.

It localises to the secreted. This is Ovomucoid from Turnix sylvaticus (Common buttonquail).